Here is a 425-residue protein sequence, read N- to C-terminus: Histidine--tRNA ligase (425 aa).

The protein belongs to the class-II aminoacyl-tRNA synthetase family. In terms of assembly, homodimer.

The protein resides in the cytoplasm. It catalyses the reaction tRNA(His) + L-histidine + ATP = L-histidyl-tRNA(His) + AMP + diphosphate + H(+). This chain is Histidine--tRNA ligase, found in Buchnera aphidicola subsp. Baizongia pistaciae (strain Bp).